The primary structure comprises 368 residues: MKAVLGLEDGTVIKGTGFGAEGTACGELVFTTQFTGYEEALTDPSYKGQILMFTYPLIGNYGVSGERFQSDNIHAEGLVVREACKKPYHYKSTRSIHKFLEDEGKPGIEGVDTRMLTIGAREHGTMRAALITGSDDGEEAVDMARNFPQVTDEELIARVTCKEPRFIPGAAGAWKGSGKPKHAVVVDLGIKRNIINNLHKRGIDLTLVPATTKPEEIAGYEPDMLFISNGPGDPEKATDAINAVKAFAGTIPVAGICFGHQIISLAMGARTYKLKFGHRGGNQPVKDLIENKIFISSQNHGYAVDADSLEGTGLYVKYLNANDKTVEGVSHKDLDIFSVQFHPEAQAGPLDTEETFFGKVVKVLGGGL.

A CPSase region spans residues 1-178; sequence MKAVLGLEDG…GAAGAWKGSG (178 aa). Residues Ser-45, Gly-230, and Gly-232 each contribute to the L-glutamine site. The region spanning 182–368 is the Glutamine amidotransferase type-1 domain; that stretch reads HAVVVDLGIK…KVVKVLGGGL (187 aa). Residue Cys-257 is the Nucleophile of the active site. Phe-258, Gln-261, Asn-299, Gly-301, and Tyr-302 together coordinate L-glutamine. Residues His-342 and Glu-344 contribute to the active site.

It belongs to the CarA family. In terms of assembly, composed of two chains; the small (or glutamine) chain promotes the hydrolysis of glutamine to ammonia, which is used by the large (or ammonia) chain to synthesize carbamoyl phosphate. Tetramer of heterodimers (alpha,beta)4.

It carries out the reaction hydrogencarbonate + L-glutamine + 2 ATP + H2O = carbamoyl phosphate + L-glutamate + 2 ADP + phosphate + 2 H(+). It catalyses the reaction L-glutamine + H2O = L-glutamate + NH4(+). Its pathway is amino-acid biosynthesis; L-arginine biosynthesis; carbamoyl phosphate from bicarbonate: step 1/1. The protein operates within pyrimidine metabolism; UMP biosynthesis via de novo pathway; (S)-dihydroorotate from bicarbonate: step 1/3. Functionally, small subunit of the glutamine-dependent carbamoyl phosphate synthetase (CPSase). CPSase catalyzes the formation of carbamoyl phosphate from the ammonia moiety of glutamine, carbonate, and phosphate donated by ATP, constituting the first step of 2 biosynthetic pathways, one leading to arginine and/or urea and the other to pyrimidine nucleotides. The small subunit (glutamine amidotransferase) binds and cleaves glutamine to supply the large subunit with the substrate ammonia. The sequence is that of Carbamoyl phosphate synthase small chain from Methanosarcina mazei (strain ATCC BAA-159 / DSM 3647 / Goe1 / Go1 / JCM 11833 / OCM 88) (Methanosarcina frisia).